The sequence spans 138 residues: Ribosome-binding factor A (138 aa).

Belongs to the RbfA family. As to quaternary structure, monomer. Binds 30S ribosomal subunits, but not 50S ribosomal subunits or 70S ribosomes.

The protein localises to the cytoplasm. Functionally, one of several proteins that assist in the late maturation steps of the functional core of the 30S ribosomal subunit. Associates with free 30S ribosomal subunits (but not with 30S subunits that are part of 70S ribosomes or polysomes). Required for efficient processing of 16S rRNA. May interact with the 5'-terminal helix region of 16S rRNA. The polypeptide is Ribosome-binding factor A (Bradyrhizobium sp. (strain BTAi1 / ATCC BAA-1182)).